The sequence spans 242 residues: Neuromodulin (242 aa).

A disordered region spans residues 1 to 242 (MLCCMRRTKQ…EEREADQEHA (242 aa)). S-palmitoyl cysteine attachment occurs at residues Cys3 and Cys4. Residues 9–32 (KQVEKNDEDQKIEQDGIKPEDKAH) are compositionally biased toward basic and acidic residues. The region spanning 31–60 (AHKAATKIQASFRGHITRKKLKGEKKGDAP) is the IQ domain. Ser41 bears the Phosphoserine; by PHK and PKC mark. Residues 66 to 84 (ANEKDEAAVAEGTEKKEGE) show a composition bias toward basic and acidic residues. The segment covering 85–97 (GSTPAEAAPGAGP) has biased composition (low complexity). At Ser86 the chain carries Phosphoserine. The segment covering 98–118 (KPEEKTGKAGETPSEEKKGEG) has biased composition (basic and acidic residues). Positions 119 to 134 (APDAATEQAAPQAPAP) are enriched in low complexity. The segment covering 143-158 (ETESATKASTDNSPSS) has biased composition (polar residues). Residues Ser155, Ser157, and Ser158 each carry the phosphoserine modification. The segment covering 159-171 (KAEDAPAKEEPKQ) has biased composition (basic and acidic residues). The segment covering 172–204 (ADVPAAVTAAAATAPAAEDAAAMATAQPPTETA) has biased composition (low complexity). Residues Ser206 and Ser207 each carry the phosphoserine; by CK2 modification. Basic and acidic residues predominate over residues 209–242 (AEEKIEAVDETKPKDSARQDEGKGEEREADQEHA).

The protein belongs to the neuromodulin family. In terms of assembly, identified in a complex containing FGFR4, NCAM1, CDH2, PLCG1, FRS2, SRC, SHC1, GAP43 and CTTN. Interacts (via IQ domain) with calmodulin. Binds calmodulin with a greater affinity in the absence of Ca(2+) than in its presence. Post-translationally, phosphorylated. Phosphorylation of this protein by a protein kinase C is specifically correlated with certain forms of synaptic plasticity. In terms of processing, palmitoylated by ZDHHC3. Palmitoylation is regulated by ARF6 and is essential for plasma membrane association and axonal and dendritic filopodia induction. Deacylated by LYPLA2.

It localises to the cell membrane. Its subcellular location is the cell projection. The protein resides in the growth cone membrane. It is found in the synapse. The protein localises to the filopodium membrane. It localises to the perikaryon. Its subcellular location is the dendrite. The protein resides in the axon. It is found in the cytoplasm. This protein is associated with nerve growth. It is a major component of the motile 'growth cones' that form the tips of elongating axons. Plays a role in axonal and dendritic filopodia induction. The sequence is that of Neuromodulin (GAP43) from Bos taurus (Bovine).